The sequence spans 393 residues: NAD(P)H-quinone oxidoreductase subunit H, chloroplastic (393 aa).

This sequence belongs to the complex I 49 kDa subunit family. In terms of assembly, NDH is composed of at least 16 different subunits, 5 of which are encoded in the nucleus.

It localises to the plastid. The protein localises to the chloroplast thylakoid membrane. The enzyme catalyses a plastoquinone + NADH + (n+1) H(+)(in) = a plastoquinol + NAD(+) + n H(+)(out). It catalyses the reaction a plastoquinone + NADPH + (n+1) H(+)(in) = a plastoquinol + NADP(+) + n H(+)(out). In terms of biological role, NDH shuttles electrons from NAD(P)H:plastoquinone, via FMN and iron-sulfur (Fe-S) centers, to quinones in the photosynthetic chain and possibly in a chloroplast respiratory chain. The immediate electron acceptor for the enzyme in this species is believed to be plastoquinone. Couples the redox reaction to proton translocation, and thus conserves the redox energy in a proton gradient. The polypeptide is NAD(P)H-quinone oxidoreductase subunit H, chloroplastic (Guizotia abyssinica (Niger)).